The chain runs to 212 residues: uncharacterized protein (212 aa).

This is an uncharacterized protein from Acanthamoeba polyphaga mimivirus (APMV).